The sequence spans 220 residues: Probable acrEF/envCD operon repressor (220 aa).

The 61-residue stretch at 10 to 70 (LKTRQELIET…EMWLQQPSLR (61 aa)) folds into the HTH tetR-type domain. The H-T-H motif DNA-binding region spans 33–52 (TLNDIADAANVTRGAIYWHF).

Potential regulator protein for the acrEF/envCD genes. This Escherichia coli O157:H7 protein is Probable acrEF/envCD operon repressor (envR).